The sequence spans 266 residues: MKQAIGFIDSGVGGLTVVREVLKQLPHEQVYYLGDTARCPYGPRDKEEVAQFTWEMTNFLVDRGIKMLVIACNTATAAALYDIREKLDIPVIGVIQPGSRAALKATRNNKIGVLGTLGTVESMAYPTALKGLNRRVEVDSLACPKFVSVVESGEYKSAIAKKVVAESLLPLKSTKIDTVILGCTHYPLLKPIIENFMGDGVAVINSGEETASEVSALLDYHNLLDATDDEIEHRFFTTGSTQIFKDIAKDWLNMPDMTVEHIKLGK.

Residues aspartate 9–serine 10 and tyrosine 41–glycine 42 contribute to the substrate site. The active-site Proton donor/acceptor is cysteine 72. Residue asparagine 73–threonine 74 coordinates substrate. Cysteine 183 functions as the Proton donor/acceptor in the catalytic mechanism. Substrate is bound at residue threonine 184–histidine 185.

Belongs to the aspartate/glutamate racemases family.

The catalysed reaction is L-glutamate = D-glutamate. It functions in the pathway cell wall biogenesis; peptidoglycan biosynthesis. In terms of biological role, provides the (R)-glutamate required for cell wall biosynthesis. The sequence is that of Glutamate racemase from Listeria innocua serovar 6a (strain ATCC BAA-680 / CLIP 11262).